A 312-amino-acid chain; its full sequence is Olfactory receptor 6X1 (312 aa).

Topologically, residues 1–23 (MRNGTVITEFILLGFPVIQGLQT) are extracellular. N3 carries an N-linked (GlcNAc...) asparagine glycan. Residues 24–44 (PLFIAIFLTYILTLAGNGLII) form a helical membrane-spanning segment. Residues 45-52 (ATVWAEPR) lie on the Cytoplasmic side of the membrane. Residues 53-73 (LQIPMYFFLCNLSFLEIWYTT) traverse the membrane as a helical segment. The Extracellular portion of the chain corresponds to 74–97 (TVIPKLLGTFVVARTVICMSCCLL). Residues C95 and C187 are joined by a disulfide bond. The helical transmembrane segment at 98-118 (QAFFHFFVGTTEFLILTIMSF) threads the bilayer. The Cytoplasmic segment spans residues 119-137 (DRYLTICNPLHHPTIMTSK). A helical membrane pass occupies residues 138–158 (LCLQLALSSWVVGFTIVFCQT). The Extracellular segment spans residues 159 to 195 (MLLIQLPFCGNNVISHFYCDVGPSLKAACIDTSILEL). The helical transmembrane segment at 196–215 (LGVIATILVIPGSLLFNMIS) threads the bilayer. The Cytoplasmic segment spans residues 216 to 235 (YIYILSAILRIPSATGHQKT). A helical membrane pass occupies residues 236–256 (FSTCASHLTVVSLLYGAVLFM). The Extracellular segment spans residues 257–269 (YLRPTAHSSFKIN). A helical transmembrane segment spans residues 270 to 290 (KVVSVLNTILTPLLNPFIYTI). Residues 291–312 (RNKEVKGALRKAMTCPKTGHAK) lie on the Cytoplasmic side of the membrane.

Belongs to the G-protein coupled receptor 1 family.

The protein resides in the cell membrane. Its function is as follows. Odorant receptor. The chain is Olfactory receptor 6X1 (OR6X1) from Homo sapiens (Human).